Consider the following 371-residue polypeptide: T-cell acute lymphocytic leukemia protein 1 (371 aa).

The interval 1–71 (MMEKRQPELC…DVPLQNSSNG (71 aa)) is disordered. Residues 34 to 57 (GCKEDEESKREEGDKEGGGRFKGD) show a composition bias toward basic and acidic residues. Positions 204-256 (VRRIFTNSRERWRQQNVNGAFAELRKLIPTHPPDKKLSKNEILRLAMKYISFL) constitute a bHLH domain. Residues 263-371 (QDGGRNVSST…GRPLDGSSRR (109 aa)) form a disordered region. A compositionally biased stretch (basic and acidic residues) spans 293-305 (HQDRVVGLARDDI). Over residues 321–335 (GDADGSPESFMEDQD) the composition is skewed to acidic residues.

In terms of tissue distribution, expressed in the main hemopoietic organs in adults, namely the kidney and the spleen. Also expressed in the liver, brain, gill and gonads.

Its subcellular location is the nucleus. Its function is as follows. Transcription factor that plays a pivotal role in hemopoietic and endothelial development. In Takifugu rubripes (Japanese pufferfish), this protein is T-cell acute lymphocytic leukemia protein 1.